Reading from the N-terminus, the 618-residue chain is Keratin, type I cytoskeletal 9 (618 aa).

The segment at M1 to S49 is disordered. The head stretch occupies residues M1–N137. Low complexity predominate over residues S7–S16. Phosphoserine is present on residues S14 and S17. The segment covering S17–A26 has biased composition (gly residues). The segment covering S27–S49 has biased composition (low complexity). The segment at E138–W173 is coil 1A. Residues E138–F450 enclose the IF rod domain. A linker 1 region spans residues Y174–T192. Residues I193–L284 are coil 1B. Residues T285–V307 are linker 12. The tract at residues L308–G446 is coil 2. The tail stretch occupies residues Q447–S609. A disordered region spans residues D449–R618. Residues G456–N603 are compositionally biased toward gly residues. Low complexity predominate over residues S607–R618.

This sequence belongs to the intermediate filament family. As to quaternary structure, heterotetramer of two type I and two type II keratins. In terms of tissue distribution, expressed in the perinuclear ring of spermatid manchettes within testis and in keratinocytes of the suprabasal layer of footpad epidermis (at protein level).

Its function is as follows. May serve an important special function either in the mature palmar and plantar skin tissue or in the morphogenetic program of the formation of these tissues. Plays a role in keratin filament assembly. May be involved in spermatid nuclear shaping and sperm development. The chain is Keratin, type I cytoskeletal 9 (Krt9) from Rattus norvegicus (Rat).